The following is a 305-amino-acid chain: Ornithine carbamoyltransferase, catabolic (305 aa).

Carbamoyl phosphate contacts are provided by residues 50–53, Gln77, Arg101, and 128–131; these read STRT and HPLQ. L-ornithine is bound by residues Asn159, Asp223, and 227 to 228; that span reads SM. Residues 263–264 and Arg291 contribute to the carbamoyl phosphate site; that span reads CL.

This sequence belongs to the aspartate/ornithine carbamoyltransferase superfamily. OTCase family.

The protein resides in the cytoplasm. It carries out the reaction carbamoyl phosphate + L-ornithine = L-citrulline + phosphate + H(+). Its pathway is amino-acid degradation; L-arginine degradation via ADI pathway; carbamoyl phosphate from L-arginine: step 2/2. In terms of biological role, reversibly catalyzes the transfer of the carbamoyl group from carbamoyl phosphate (CP) to the N(epsilon) atom of ornithine (ORN) to produce L-citrulline. The protein is Ornithine carbamoyltransferase, catabolic of Thermoplasma acidophilum (strain ATCC 25905 / DSM 1728 / JCM 9062 / NBRC 15155 / AMRC-C165).